We begin with the raw amino-acid sequence, 113 residues long: Replication initiation control protein YabA (113 aa).

Positions 86, 88, 102, and 105 each coordinate Zn(2+).

Belongs to the YabA family. In terms of assembly, homotetramer. Interacts with both DnaA and DnaN, acting as a bridge between these two proteins. Zn(2+) is required as a cofactor.

It localises to the cytoplasm. Its subcellular location is the nucleoid. Involved in control of chromosome replication initiation. Inhibits the cooperative binding of DnaA to the oriC region, thus negatively regulating initiation of chromosome replication. Inhibits the ability of DnaA-ATP to form a helix on DNA; does not disassemble preformed DnaA-DNA helices. Decreases the residence time of DnaA on the chromosome at its binding sites (oriC, replication forks and promoter-binding sites). Tethers DnaA to the replication machinery via the DNA polymerase beta sliding clamp subunit (dnaN). Associates with oriC and other DnaA targets on the chromosome in a DnaA-dependent manner. This chain is Replication initiation control protein YabA, found in Pediococcus pentosaceus (strain ATCC 25745 / CCUG 21536 / LMG 10740 / 183-1w).